Here is a 214-residue protein sequence, read N- to C-terminus: uncharacterized protein (214 aa).

The region spanning 2-118 (KIVIADDHHV…ELVKTRQVHG (117 aa)) is the Response regulatory domain. A 4-aspartylphosphate modification is found at D53. The 66-residue stretch at 142–207 (EKEKYYQLTR…QAALFAVKYN (66 aa)) folds into the HTH luxR-type domain. Positions 166-185 (NKEIAAALFISEKTVKTHVS) form a DNA-binding region, H-T-H motif.

In terms of processing, phosphorylated by YhcY.

The protein localises to the cytoplasm. Member of the two-component regulatory system YhcY/YhcZ. This is an uncharacterized protein from Bacillus subtilis (strain 168).